A 250-amino-acid chain; its full sequence is Triosephosphate isomerase (250 aa).

9 to 11 (NWK) provides a ligand contact to substrate. The active-site Electrophile is H94. The active-site Proton acceptor is the E165. Substrate is bound by residues G171, S211, and 232-233 (GG).

The protein belongs to the triosephosphate isomerase family. In terms of assembly, homodimer.

It localises to the cytoplasm. The enzyme catalyses D-glyceraldehyde 3-phosphate = dihydroxyacetone phosphate. The protein operates within carbohydrate biosynthesis; gluconeogenesis. Its pathway is carbohydrate degradation; glycolysis; D-glyceraldehyde 3-phosphate from glycerone phosphate: step 1/1. Its function is as follows. Involved in the gluconeogenesis. Catalyzes stereospecifically the conversion of dihydroxyacetone phosphate (DHAP) to D-glyceraldehyde-3-phosphate (G3P). The sequence is that of Triosephosphate isomerase from Alkalilimnicola ehrlichii (strain ATCC BAA-1101 / DSM 17681 / MLHE-1).